Here is a 428-residue protein sequence, read N- to C-terminus: Enolase (428 aa).

Gln-163 provides a ligand contact to (2R)-2-phosphoglycerate. Glu-205 functions as the Proton donor in the catalytic mechanism. Mg(2+)-binding residues include Asp-242, Glu-285, and Asp-312. Positions 337, 366, 367, and 388 each coordinate (2R)-2-phosphoglycerate. Lys-337 serves as the catalytic Proton acceptor.

Belongs to the enolase family. Mg(2+) is required as a cofactor.

The protein localises to the cytoplasm. It localises to the secreted. The protein resides in the cell surface. It catalyses the reaction (2R)-2-phosphoglycerate = phosphoenolpyruvate + H2O. The protein operates within carbohydrate degradation; glycolysis; pyruvate from D-glyceraldehyde 3-phosphate: step 4/5. Its function is as follows. Catalyzes the reversible conversion of 2-phosphoglycerate (2-PG) into phosphoenolpyruvate (PEP). It is essential for the degradation of carbohydrates via glycolysis. The chain is Enolase from Novosphingobium aromaticivorans (strain ATCC 700278 / DSM 12444 / CCUG 56034 / CIP 105152 / NBRC 16084 / F199).